We begin with the raw amino-acid sequence, 122 residues long: Large ribosomal subunit protein uL14c (122 aa).

The protein belongs to the universal ribosomal protein uL14 family. As to quaternary structure, part of the 50S ribosomal subunit.

It is found in the plastid. The protein localises to the chloroplast. Binds to 23S rRNA. In Oltmannsiellopsis viridis (Marine flagellate), this protein is Large ribosomal subunit protein uL14c.